Reading from the N-terminus, the 141-residue chain is MAKKLLRVVKLQLEAGKATPAPPVGPALGQYGVNLMEFCKKFNAATADQAGTLLPVEISVFEDRSFTFIVKTPPASFLVKKAAGLKSGAKEPSKEVVGKIKRKQLREIAETKMQDLNAKDLDAAMKIIAGTARSMGIEIED.

The protein belongs to the universal ribosomal protein uL11 family. Part of the ribosomal stalk of the 50S ribosomal subunit. Interacts with L10 and the large rRNA to form the base of the stalk. L10 forms an elongated spine to which L12 dimers bind in a sequential fashion forming a multimeric L10(L12)X complex. In terms of processing, one or more lysine residues are methylated.

Its function is as follows. Forms part of the ribosomal stalk which helps the ribosome interact with GTP-bound translation factors. The polypeptide is Large ribosomal subunit protein uL11 (Petrotoga mobilis (strain DSM 10674 / SJ95)).